A 114-amino-acid polypeptide reads, in one-letter code: Iron-sulfur cluster assembly protein CyaY (114 aa).

This sequence belongs to the frataxin family.

In terms of biological role, involved in iron-sulfur (Fe-S) cluster assembly. May act as a regulator of Fe-S biogenesis. This is Iron-sulfur cluster assembly protein CyaY from Ralstonia pickettii (strain 12J).